The chain runs to 424 residues: ATP synthase subunit beta, mitochondrial (424 aa).

The transit peptide at M1–L60 directs the protein to the mitochondrion. Residues G187–T194, G188–V195, E219–R220, and Y374 each bind ATP.

This sequence belongs to the ATPase alpha/beta chains family. In terms of assembly, F-type ATPases have 2 components, CF(1) - the catalytic core - and CF(0) - the membrane proton channel. CF(1) has five subunits: alpha(3), beta(3), gamma(1), delta(1), epsilon(1). CF(0) has three main subunits: a, b and c.

The protein localises to the mitochondrion. The protein resides in the mitochondrion inner membrane. It carries out the reaction ATP + H2O + 4 H(+)(in) = ADP + phosphate + 5 H(+)(out). In terms of biological role, ATP synthase subunit beta; part of the gene cluster that mediates the biosynthesis of citreoviridin, an inhibitor of the of F1-ATPase beta-subunit. Mitochondrial membrane ATP synthase (F(1)F(0) ATP synthase or Complex V) produces ATP from ADP in the presence of a proton gradient across the membrane which is generated by electron transport complexes of the respiratory chain. Whereas ctvA to ctvD constitute the core biosynthetic gene cluster, ctvE acts as a self-resistance gene. This is ATP synthase subunit beta, mitochondrial from Aspergillus terreus (strain NIH 2624 / FGSC A1156).